Reading from the N-terminus, the 494-residue chain is Serine carboxypeptidase-like 21 (494 aa).

Residues 1–23 (MGRLVEAIIASILLSLCFTITKS) form the signal peptide. N-linked (GlcNAc...) asparagine glycosylation is found at Asn37 and Asn69. 3 cysteine pairs are disulfide-bonded: Cys85–Cys383, Cys247–Cys263, and Cys286–Cys350. Ser179 is an active-site residue. N-linked (GlcNAc...) asparagine glycosylation is found at Asn198 and Asn248. N-linked (GlcNAc...) asparagine glycosylation occurs at Asn402. Residue Asp418 is part of the active site. An N-linked (GlcNAc...) asparagine glycan is attached at Asn460. His471 is an active-site residue.

Belongs to the peptidase S10 family. In terms of tissue distribution, expressed in flowers and siliques.

The protein resides in the secreted. Its function is as follows. Probable carboxypeptidase. In Arabidopsis thaliana (Mouse-ear cress), this protein is Serine carboxypeptidase-like 21 (SCPL21).